The primary structure comprises 511 residues: Histidine ammonia-lyase (511 aa).

The segment at residues 142-144 (ASG) is a cross-link (5-imidazolinone (Ala-Gly)). The residue at position 143 (Ser-143) is a 2,3-didehydroalanine (Ser).

This sequence belongs to the PAL/histidase family. Post-translationally, contains an active site 4-methylidene-imidazol-5-one (MIO), which is formed autocatalytically by cyclization and dehydration of residues Ala-Ser-Gly.

It is found in the cytoplasm. It carries out the reaction L-histidine = trans-urocanate + NH4(+). It participates in amino-acid degradation; L-histidine degradation into L-glutamate; N-formimidoyl-L-glutamate from L-histidine: step 1/3. The polypeptide is Histidine ammonia-lyase (Chelativorans sp. (strain BNC1)).